The sequence spans 280 residues: uncharacterized protein (280 aa).

The N-terminal stretch at 1-21 (MRPVIKVGLSTASVYPLRAEA) is a signal peptide.

This sequence to M.tuberculosis Rv0498 and S.coelicolor SCO3347.

This is an uncharacterized protein from Mycobacterium leprae (strain TN).